Consider the following 186-residue polypeptide: ATP synthase subunit delta (186 aa).

The protein belongs to the ATPase delta chain family. In terms of assembly, F-type ATPases have 2 components, F(1) - the catalytic core - and F(0) - the membrane proton channel. F(1) has five subunits: alpha(3), beta(3), gamma(1), delta(1), epsilon(1). F(0) has three main subunits: a(1), b(2) and c(10-14). The alpha and beta chains form an alternating ring which encloses part of the gamma chain. F(1) is attached to F(0) by a central stalk formed by the gamma and epsilon chains, while a peripheral stalk is formed by the delta and b chains.

It localises to the cell inner membrane. F(1)F(0) ATP synthase produces ATP from ADP in the presence of a proton or sodium gradient. F-type ATPases consist of two structural domains, F(1) containing the extramembraneous catalytic core and F(0) containing the membrane proton channel, linked together by a central stalk and a peripheral stalk. During catalysis, ATP synthesis in the catalytic domain of F(1) is coupled via a rotary mechanism of the central stalk subunits to proton translocation. In terms of biological role, this protein is part of the stalk that links CF(0) to CF(1). It either transmits conformational changes from CF(0) to CF(1) or is implicated in proton conduction. The chain is ATP synthase subunit delta from Azorhizobium caulinodans (strain ATCC 43989 / DSM 5975 / JCM 20966 / LMG 6465 / NBRC 14845 / NCIMB 13405 / ORS 571).